The following is a 199-amino-acid chain: Charged multivesicular body protein 1B2 (199 aa).

A coiled-coil region spans residues 15 to 47 (AKELNRNAKKCDKEEKAEKAKIKKAIQKGNTEV). The segment at 132–156 (MEDTMSSTTTLTTPQNQVDMLLQEM) is interaction with IST1. The segment at 167-199 (ELPQGQTGSVGASVASTEQDELSQRLARLRDQV) is disordered. The segment covering 170–183 (QGQTGSVGASVAST) has biased composition (polar residues). An interaction with SPAST region spans residues 174–199 (GSVGASVASTEQDELSQRLARLRDQV). A coiled-coil region spans residues 177–199 (GASVASTEQDELSQRLARLRDQV). The tract at residues 180–196 (VASTEQDELSQRLARLR) is interaction with VPS4A, MITD1 and STAMBP. The segment at 180–199 (VASTEQDELSQRLARLRDQV) is interaction with VTA1. Residues 183 to 199 (TEQDELSQRLARLRDQV) are interaction with VPS4B. The MIT-interacting motif signature appears at 186–196 (DELSQRLARLR).

Belongs to the SNF7 family. Probable peripherally associated component of the endosomal sorting required for transport complex III (ESCRT-III). ESCRT-III components are thought to multimerize to form a flat lattice on the perimeter membrane of the endosome. Several assembly forms of ESCRT-III may exist that interact and act sequentially. Interacts with CHMP1A. Interacts with VTA1; the interaction probably involves the open conformation of CHMP1B. Interacts with CHMP2A. Interacts with VPS4A; the interaction is direct. Interacts with VPS4B; the interaction is direct. Interacts with SPAST (via MIT domain); the interaction is direct. Interacts with IST1. Interacts with MITD1. Interacts with STAMBP.

The protein localises to the cytoplasm. It localises to the cytosol. It is found in the endosome. The protein resides in the late endosome membrane. Probable peripherally associated component of the endosomal sorting required for transport complex III (ESCRT-III) which is involved in multivesicular bodies (MVBs) formation and sorting of endosomal cargo proteins into MVBs. MVBs contain intraluminal vesicles (ILVs) that are generated by invagination and scission from the limiting membrane of the endosome and mostly are delivered to lysosomes enabling degradation of membrane proteins, such as stimulated growth factor receptors, lysosomal enzymes and lipids. The MVB pathway appears to require the sequential function of ESCRT-O, -I,-II and -III complexes. ESCRT-III proteins mostly dissociate from the invaginating membrane before the ILV is released. The ESCRT machinery also functions in topologically equivalent membrane fission events, such as the terminal stages of cytokinesis. ESCRT-III proteins are believed to mediate the necessary vesicle extrusion and/or membrane fission activities, possibly in conjunction with the AAA ATPase VPS4. Involved in cytokinesis. Involved in recruiting VPS4A and/or VPS4B and SPAST to the midbody of dividing cells. This chain is Charged multivesicular body protein 1B2, found in Mus musculus (Mouse).